Here is a 287-residue protein sequence, read N- to C-terminus: Large ribosomal subunit protein uL2 (287 aa).

A disordered region spans residues 203–287 (LSAGKAGRNR…SKRGRGGRES (85 aa)). Basic residues-rich tracts occupy residues 209–220 (GRNRWKGRRPKV) and 258–287 (KTRKPKKASSKLIIRRRRKSSKRGRGGRES).

The protein belongs to the universal ribosomal protein uL2 family. In terms of assembly, part of the 50S ribosomal subunit. Forms a bridge to the 30S subunit in the 70S ribosome.

One of the primary rRNA binding proteins. Required for association of the 30S and 50S subunits to form the 70S ribosome, for tRNA binding and peptide bond formation. It has been suggested to have peptidyltransferase activity; this is somewhat controversial. Makes several contacts with the 16S rRNA in the 70S ribosome. The sequence is that of Large ribosomal subunit protein uL2 from Nostoc sp. (strain PCC 7120 / SAG 25.82 / UTEX 2576).